We begin with the raw amino-acid sequence, 695 residues long: UvrABC system protein C (695 aa).

Residues 1–10 show a composition bias toward basic and acidic residues; the sequence is MNQDPAETRD. The tract at residues 1 to 53 is disordered; it reads MNQDPAETRDTAAPPPADTTSPSPVSPELEPRSAPGAQDIDAASASLTVDEDD. Low complexity predominate over residues 18 to 27; that stretch reads DTTSPSPVSP. Residues 88-166 enclose the GIY-YIG domain; that stretch reads TSPGVYRMLN…IKQLRPRFNV (79 aa). In terms of domain architecture, UVR spans 276–311; sequence RAVKQELAVEMEKASNELEFETAALYRDRLAALSAI.

It belongs to the UvrC family. Interacts with UvrB in an incision complex.

The protein localises to the cytoplasm. Functionally, the UvrABC repair system catalyzes the recognition and processing of DNA lesions. UvrC both incises the 5' and 3' sides of the lesion. The N-terminal half is responsible for the 3' incision and the C-terminal half is responsible for the 5' incision. The polypeptide is UvrABC system protein C (Rhodopseudomonas palustris (strain BisB5)).